Reading from the N-terminus, the 578-residue chain is Triokinase/FMN cyclase (578 aa).

The region spanning 9–336 (SVEGCADDAL…IDAETTAKAW (328 aa)) is the DhaK domain. Residues 56-59 (GSGH), Lys-109, and Asp-114 each bind dihydroxyacetone. His-221 functions as the Tele-hemiaminal-histidine intermediate in the catalytic mechanism. Positions 372–571 (KQMALVLDRI…AAAIFRAILE (200 aa)) constitute a DhaL domain. ATP contacts are provided by residues 401-404 (DGDC), 446-447 (SS), Gly-486, and 494-495 (TM). Phosphoserine is present on residues Ser-511 and Ser-545. ATP is bound at residue 556 to 558 (DPG).

It belongs to the dihydroxyacetone kinase (DAK) family. In terms of assembly, homodimer. Interacts with IFIH1 (via the CARD domains), the interaction is inhibited by viral infection. Mg(2+) is required as a cofactor. Requires Mn(2+) as cofactor. The cofactor is Co(2+).

It catalyses the reaction dihydroxyacetone + ATP = dihydroxyacetone phosphate + ADP + H(+). The enzyme catalyses D-glyceraldehyde + ATP = D-glyceraldehyde 3-phosphate + ADP + H(+). It carries out the reaction FAD = riboflavin cyclic-4',5'-phosphate + AMP + H(+). Its activity is regulated as follows. Each activity is inhibited by the substrate(s) of the other. In terms of biological role, catalyzes both the phosphorylation of dihydroxyacetone and of glyceraldehyde, and the splitting of ribonucleoside diphosphate-X compounds among which FAD is the best substrate. Represses IFIH1-mediated cellular antiviral response. The polypeptide is Triokinase/FMN cyclase (Mus musculus (Mouse)).